The following is an 839-amino-acid chain: Autophagy-related protein 9A (839 aa).

The tract at residues 1 to 20 is disordered; it reads MAQFDTEYQRLEASYSDSPP. Alanine 2 is modified (N-acetylalanine). The Cytoplasmic portion of the chain corresponds to 2-61; it reads AQFDTEYQRLEASYSDSPPGEEDLLVHVAEGSKSPWHHIENLDLFFSRVYNLHQKNGFTC. Residues 8 to 11 carry the Tyrosine-based sorting signal motif; it reads YQRL. Phosphoserine occurs at positions 14, 16, and 18. A helical transmembrane segment spans residues 62–84; it reads MLIGEIFELMQFLFVVAFTTFLV. The Lumenal portion of the chain corresponds to 85 to 128; the sequence is SCVDYDILFANKMVNHSLHPTEPVKVTLPDAFLPAQVCSARIQE. An N-linked (GlcNAc...) asparagine glycan is attached at asparagine 99. A helical transmembrane segment spans residues 129-154; it reads NGSLITILVIAGVFWIHRLIKFIYNI. The Cytoplasmic segment spans residues 155-290; the sequence is CCYWEIHSFY…ELAQRLSNRI (136 aa). An intramembrane segment occupies 291 to 301; sequence LWIGIANFLLC. Over 302-319 the chain is Cytoplasmic; sequence PLILIWQILYAFFSYAEV. Residues 320-328 lie within the membrane without spanning it; that stretch reads LKREPGALG. Over 329–371 the chain is Cytoplasmic; sequence ARCWSLYGRCYLRHFNELEHELQSRLNRGYKPASKYMNCFLSP. A helical membrane pass occupies residues 372–397; sequence LLTLLAKNGAFFAGSILAVLIALTIY. The Lumenal segment spans residues 398–406; sequence DEDVLAVEH. Residues 407–424 form a helical membrane-spanning segment; sequence VLTTVTLLGVTVTVCRSF. Over 425-470 the chain is Cytoplasmic; that stretch reads IPDQHMVFCPEQLLRVILAHIHYMPDHWQGNAHRSQTRDEFAQLFQ. An intramembrane segment occupies 471 to 480; the sequence is YKAVFILEEL. Residues 481–483 are Cytoplasmic-facing; sequence LSP. Residues 484–492 lie within the membrane without spanning it; the sequence is IVTPLILIF. Residues 493–839 lie on the Cytoplasmic side of the membrane; the sequence is CLRPRALEII…DELPPQVHKV (347 aa). Serine 656, serine 735, serine 738, serine 741, and serine 828 each carry phosphoserine. 2 disordered regions span residues 656 to 686 and 717 to 839; these read SPLQPGQAPTGRAHSTMTGSGVDARTASSGS and HKQQ…VHKV. Over residues 724–736 the composition is skewed to basic and acidic residues; sequence EPERHVWHRRESD. 2 stretches are compositionally biased toward acidic residues: residues 737–747 and 823–832; these read ESGESAPDEGG and VPEEGSEDEL.

The protein belongs to the ATG9 family. As to quaternary structure, homotrimer; forms a homotrimer with a central pore that forms a path between the two membrane leaflets. Interacts (via cytoplasmic its C-terminus) with ATG2A. Interacts with SUPT20H. Interacts (via the tyrosine-based sorting signal motif) with AP4M1; promoting association with the AP-4 complex. Interacts with ARFIP1 and ARFIP2. Interacts with PI4K2A and PI4KB. Interacts with ATG4A; the interaction is direct and promotes ATG9A trafficking. Ufmylated in a DDRGK1 dependent manner.

Its subcellular location is the preautophagosomal structure membrane. It localises to the cytoplasmic vesicle. It is found in the autophagosome membrane. The protein resides in the golgi apparatus. The protein localises to the trans-Golgi network membrane. Its subcellular location is the late endosome membrane. It localises to the recycling endosome membrane. It is found in the endoplasmic reticulum membrane. The protein resides in the mitochondrion membrane. The catalysed reaction is a 1,2-diacyl-sn-glycero-3-phosphocholine(in) = a 1,2-diacyl-sn-glycero-3-phosphocholine(out). The enzyme catalyses a 1,2-diacyl-sn-glycero-3-phospho-L-serine(in) = a 1,2-diacyl-sn-glycero-3-phospho-L-serine(out). It carries out the reaction a 1,2-diacyl-sn-glycero-3-phosphoethanolamine(in) = a 1,2-diacyl-sn-glycero-3-phosphoethanolamine(out). In terms of biological role, phospholipid scramblase involved in autophagy by mediating autophagosomal membrane expansion. Cycles between the preautophagosomal structure/phagophore assembly site (PAS) and the cytoplasmic vesicle pool and supplies membrane for the growing autophagosome. Lipid scramblase activity plays a key role in preautophagosomal structure/phagophore assembly by distributing the phospholipids that arrive through ATG2 (ATG2A or ATG2B) from the cytoplasmic to the luminal leaflet of the bilayer, thereby driving autophagosomal membrane expansion. Also required to supply phosphatidylinositol 4-phosphate to the autophagosome initiation site by recruiting the phosphatidylinositol 4-kinase beta (PI4KB) in a process dependent on ARFIP2, but not ARFIP1. In addition to autophagy, also plays a role in necrotic cell death. In Homo sapiens (Human), this protein is Autophagy-related protein 9A.